We begin with the raw amino-acid sequence, 278 residues long: Chitosanase (278 aa).

An N-terminal signal peptide occupies residues 1 to 40 (MHSQHRTARIALAVVLTAIPASLATAGVGYASTQASTAVK). Catalysis depends on E62, which acts as the Proton donor. The Nucleophile role is filled by D80.

The protein belongs to the glycosyl hydrolase 46 family.

It is found in the secreted. It carries out the reaction Endohydrolysis of beta-(1-&gt;4)-linkages between D-glucosamine residues in a partly acetylated chitosan.. In terms of biological role, aids in the defense against invading fungal pathogens by degrading their cell wall chitosan. In Streptomyces sp. (strain N174), this protein is Chitosanase (csn).